Consider the following 649-residue polypeptide: tRNA-guanine(15) transglycosylase (649 aa).

D88 serves as the catalytic Nucleophile. 2 residues coordinate substrate: D123 and A194. Positions 280, 282, and 285 each coordinate Zn(2+). The region spanning K572–K647 is the PUA domain.

It belongs to the archaeosine tRNA-ribosyltransferase family. The cofactor is Zn(2+).

It carries out the reaction guanosine(15) in tRNA + 7-cyano-7-deazaguanine = 7-cyano-7-carbaguanosine(15) in tRNA + guanine. Its pathway is tRNA modification; archaeosine-tRNA biosynthesis. Its function is as follows. Exchanges the guanine residue with 7-cyano-7-deazaguanine (preQ0) at position 15 in the dihydrouridine loop (D-loop) of archaeal tRNAs. The protein is tRNA-guanine(15) transglycosylase of Methanococcus vannielii (strain ATCC 35089 / DSM 1224 / JCM 13029 / OCM 148 / SB).